The sequence spans 511 residues: Histidine ammonia-lyase (511 aa).

The segment at residues 142-144 (ASG) is a cross-link (5-imidazolinone (Ala-Gly)). Serine 143 bears the 2,3-didehydroalanine (Ser) mark.

Belongs to the PAL/histidase family. Contains an active site 4-methylidene-imidazol-5-one (MIO), which is formed autocatalytically by cyclization and dehydration of residues Ala-Ser-Gly.

Its subcellular location is the cytoplasm. It catalyses the reaction L-histidine = trans-urocanate + NH4(+). The protein operates within amino-acid degradation; L-histidine degradation into L-glutamate; N-formimidoyl-L-glutamate from L-histidine: step 1/3. The protein is Histidine ammonia-lyase of Brucella ovis (strain ATCC 25840 / 63/290 / NCTC 10512).